A 313-amino-acid chain; its full sequence is D-alanine--D-alanine ligase (313 aa).

The ATP-grasp domain maps to 108 to 308 (KLVWQQTGVP…YSELVVKVLS (201 aa)). 138 to 193 (VAKLGLPLFVKPASEGSSVAVLKVKTADALPAALAEAATHDKIVIVEKSIEGGGEY) is a binding site for ATP. Mg(2+)-binding residues include aspartate 262, glutamate 275, and asparagine 277.

This sequence belongs to the D-alanine--D-alanine ligase family. The cofactor is Mg(2+). It depends on Mn(2+) as a cofactor.

It localises to the cytoplasm. The enzyme catalyses 2 D-alanine + ATP = D-alanyl-D-alanine + ADP + phosphate + H(+). It functions in the pathway cell wall biogenesis; peptidoglycan biosynthesis. Cell wall formation. This chain is D-alanine--D-alanine ligase, found in Burkholderia orbicola (strain MC0-3).